Reading from the N-terminus, the 154-residue chain is Protein X (154 aa).

Residues 68-117 form a mitochondrial targeting sequence region; that stretch reads PCALRFTSARRMETTVNANQVLPKVLHKRTLGLSALSTTDLEAYFKDCVF.

It belongs to the orthohepadnavirus protein X family. May form homodimer. May interact with host CEBPA, CFLAR, CREB1, DDB1, E4F1, HBXIP, HSPD1/HSP60, NFKBIA, POLR2E and SMAD4. Interacts with host SMC5-SMC6 complex and induces its degradation. Interacts with host TRPC4AP; leading to prevent ubiquitination of TRPC4AP. Interacts with host PLSCR1; this interaction promotes ubiquitination and degradation of HBx and impairs HBx-mediated cell proliferation. A fraction may be phosphorylated in insect cells and HepG2 cells, a human hepatoblastoma cell line. Phosphorylated in vitro by host protein kinase C or mitogen-activated protein kinase. N-acetylated in insect cells.

The protein resides in the host cytoplasm. It localises to the host nucleus. It is found in the host mitochondrion. Multifunctional protein that plays a role in silencing host antiviral defenses and promoting viral transcription. Does not seem to be essential for HBV infection. May be directly involved in development of cirrhosis and liver cancer (hepatocellular carcinoma). Most of cytosolic activities involve modulation of cytosolic calcium. The effect on apoptosis is controversial depending on the cell types in which the studies have been conducted. May induce apoptosis by localizing in mitochondria and causing loss of mitochondrial membrane potential. May also modulate apoptosis by binding host CFLAR, a key regulator of the death-inducing signaling complex (DISC). Promotes viral transcription by using the host E3 ubiquitin ligase DDB1 to target the SMC5-SMC6 complex to proteasomal degradation. This host complex would otherwise bind to viral episomal DNA, and prevents its transcription. Moderately stimulates transcription of many different viral and cellular transcription elements. Promoters and enhancers stimulated by HBx contain DNA binding sites for NF-kappa-B, AP-1, AP-2, c-EBP, ATF/CREB, or the calcium-activated factor NF-AT. The chain is Protein X from Homo sapiens (Human).